A 475-amino-acid polypeptide reads, in one-letter code: MAPQTETKAGTGFKAGVKDYRLTYYTPDYQVKDTDILAAFRMTPQPGVPVEEAGAAVAAESSTGTWTTVWTDGLTSLDRYKGRCYDIEPVPGEDNQYIAYIAYPLDLFEEGSVTNLFTSIVGNVFGFKALRALRLEDLRIPPAYTKTFQGPPHGIQVERDKLNKYGRGLLGCTIKPKLGLSAKNYGRAVYECLRGGLDFTKDDENVTSQPFMRWRDRFLFCAEAIYKSQAETGEVKGHYLNSTAGTCESMMDRAQFAKDLGVPIVMHDYLTGGLTANTSLAIYCRNNGLLLHIHRAMHAVIDRQRNHGIHFRVLAKALRLSGGDHLHSGTVVGKLEGEREITLGFVDLMRDDYIEKDRSRGIYFTQDWASLPGTMPVASGGIHVWHMPALVDIFGDDACLQFGGGTLGHPWGNACGAAANRVALEACTQARNEGRDLAREGGDVIRAACKWSPELAAACEVWKEIKFEFDTVDKL.

A propeptide spanning residues Met1 to Ala2 is cleaved from the precursor. Position 3 is an N-acetylproline (Pro3). Residue Lys14 is modified to N6,N6,N6-trimethyllysine. Substrate contacts are provided by Asn123 and Thr173. Lys175 acts as the Proton acceptor in catalysis. Substrate is bound at residue Lys177. 3 residues coordinate Mg(2+): Lys201, Asp203, and Glu204. Lys201 is modified (N6-carboxylysine). Residue His294 is the Proton acceptor of the active site. 3 residues coordinate substrate: Arg295, His327, and Ser379.

The protein belongs to the RuBisCO large chain family. Type I subfamily. In terms of assembly, heterohexadecamer of 8 large chains and 8 small chains; disulfide-linked. The disulfide link is formed within the large subunit homodimers. The cofactor is Mg(2+). Post-translationally, the disulfide bond which can form in the large chain dimeric partners within the hexadecamer appears to be associated with oxidative stress and protein turnover.

It is found in the plastid. The protein localises to the chloroplast. It carries out the reaction 2 (2R)-3-phosphoglycerate + 2 H(+) = D-ribulose 1,5-bisphosphate + CO2 + H2O. The enzyme catalyses D-ribulose 1,5-bisphosphate + O2 = 2-phosphoglycolate + (2R)-3-phosphoglycerate + 2 H(+). RuBisCO catalyzes two reactions: the carboxylation of D-ribulose 1,5-bisphosphate, the primary event in carbon dioxide fixation, as well as the oxidative fragmentation of the pentose substrate in the photorespiration process. Both reactions occur simultaneously and in competition at the same active site. This Tupiella akineta (Green alga) protein is Ribulose bisphosphate carboxylase large chain.